A 254-amino-acid polypeptide reads, in one-letter code: Fructose-1,6-bisphosphatase (254 aa).

Positions 68, 84, 86, and 87 each coordinate Mg(2+). Substrate contacts are provided by residues 87–89 (DGS), Arg-171, Ile-176, and Arg-195. Asp-202 serves as a coordination point for Mg(2+).

The protein belongs to the inositol monophosphatase superfamily. FBPase class 4 family. As to quaternary structure, homodimer. The cofactor is Mg(2+).

The enzyme catalyses beta-D-fructose 1,6-bisphosphate + H2O = beta-D-fructose 6-phosphate + phosphate. With respect to regulation, inhibited by Li(+), ADP, ATP and glucose-6-phosphate. In terms of biological role, catalyzes the conversion of D-fructose 1,6-bisphosphate to D-fructose 6-phosphate. In vitro, also has weak activity with inositol-1-phosphate, glucose-1-phosphate and glycerol-2-phosphate. The polypeptide is Fructose-1,6-bisphosphatase (Pyrococcus furiosus (strain ATCC 43587 / DSM 3638 / JCM 8422 / Vc1)).